The chain runs to 226 residues: NADH-ubiquinone oxidoreductase 19.3 kDa subunit, mitochondrial (226 aa).

A disordered region spans residues 40–68 (ATGAVAPAGAQHGIARRERREVPLPSQEG). Residues Cys-101, Cys-102, Cys-166, and Cys-196 each contribute to the [4Fe-4S] cluster site.

The protein belongs to the complex I 20 kDa subunit family. As to quaternary structure, complex I is composed of about 40 different subunits. This is a component of the iron-sulfur (IP) fragment of the enzyme. [4Fe-4S] cluster serves as cofactor.

It is found in the mitochondrion. The catalysed reaction is a ubiquinone + NADH + 5 H(+)(in) = a ubiquinol + NAD(+) + 4 H(+)(out). Core subunit of the mitochondrial membrane respiratory chain NADH dehydrogenase (Complex I) that is believed to belong to the minimal assembly required for catalysis. Complex I functions in the transfer of electrons from NADH to the respiratory chain. The immediate electron acceptor for the enzyme is believed to be ubiquinone. This chain is NADH-ubiquinone oxidoreductase 19.3 kDa subunit, mitochondrial, found in Neurospora crassa (strain ATCC 24698 / 74-OR23-1A / CBS 708.71 / DSM 1257 / FGSC 987).